Reading from the N-terminus, the 242-residue chain is MENLLKIYDIKEEELSELKALTPARICVGRAGTRLKTNTFLKFRADHAVAMDAVWSSVDEKLIDTLNFLKVQTLAKDKEEYITRPDLGRKFSEETLDYIKNNCINEPDVQIIAGDGLSATAINANLRKIYFVIVEKLKSRGYKVGTPIFVKYARVATMDKISEELNAKVTIILIGERPGLATGESMSSYMAYESSTKKPESQRTVVSNIHNKGIPSVDAGKEIVRIIDIMMKEKKSGVELRI.

Residues V155 and E176 each coordinate adenosylcob(III)alamin.

This sequence belongs to the EutC family. As to quaternary structure, the basic unit is a heterodimer which dimerizes to form tetramers. The heterotetramers trimerize; 6 large subunits form a core ring with 6 small subunits projecting outwards. It depends on adenosylcob(III)alamin as a cofactor.

The protein localises to the bacterial microcompartment. The enzyme catalyses ethanolamine = acetaldehyde + NH4(+). It functions in the pathway amine and polyamine degradation; ethanolamine degradation. Catalyzes the deamination of various vicinal amino-alcohols to oxo compounds. Allows this organism to utilize ethanolamine as the sole source of nitrogen and carbon in the presence of external vitamin B12. In Clostridium acetobutylicum (strain ATCC 824 / DSM 792 / JCM 1419 / IAM 19013 / LMG 5710 / NBRC 13948 / NRRL B-527 / VKM B-1787 / 2291 / W), this protein is Ethanolamine ammonia-lyase small subunit.